We begin with the raw amino-acid sequence, 528 residues long: Drimenol cyclase drtB (528 aa).

Belongs to the HAD-like hydrolase superfamily.

It catalyses the reaction (2E,6E)-farnesyl diphosphate + H2O = (5S,9S,10S)-drim-7-en-11-ol + diphosphate. Its pathway is secondary metabolite biosynthesis; terpenoid biosynthesis. Drimenol cyclase; part of the gene cluster that mediates the biosynthesis of various drimane-type sesquiterpene esters, compounds that exhibit diverse biological activities and are widely present in eukaryotes. The pathway begins with the synthesis of the backbone drimenol by the terpene cyclase drtB using farnesyl pyrophosphate (FPP) as substrate. The cytochrome P450 monooxygenase drtD is then responsible for the hydroxylations at C-6, C-9 and C-12, as well as the oxidation of hydroxyl groups at C-6 and C-11 to a ketone and an aldehyde, respectively. Then, the biosynthesis can go in two directions, either the hydroxylated drimenol is further hydroxylated at C-2 and C-3 by an enzyme(s) not associated with the drt cluster, or the FAD-binding oxidoreductase drtC further oxidizes C-11 or C-12 to form the butyrolactone ring. DrtB, drtD and drtC are solely responsible for the formation of the different drimane structures observed during drimane sesquiterpenes biosynthesis. The polyketide synthase drtA synthesizes different lengths (C6 and C8) of PKS chains, which are then oxidized to varying degrees by the short-chain dehydrogenase drtF. Finally, these PKS chains are transferred onto drimane sesquiterpenes by the acyltransferase drtE, forming the sesquiterpene esters. In addition to the different fatty acyl-CoA chains produced by drtA, drtE is also able to use cinnamoyl-CoA as a substrate. The sequence is that of Drimenol cyclase drtB from Aspergillus calidoustus.